The primary structure comprises 299 residues: Protease HtpX homolog (299 aa).

A run of 2 helical transmembrane segments spans residues 7-24 and 29-46; these read GILM…GALI and GAII…FTFW. Histidine 130 serves as a coordination point for Zn(2+). Residue glutamate 131 is part of the active site. Residue histidine 134 participates in Zn(2+) binding. The next 2 helical transmembrane spans lie at 145–165 and 174–194; these read VTAT…FFGG and PVGI…AGLV. Glutamate 203 is a Zn(2+) binding site.

This sequence belongs to the peptidase M48B family. The cofactor is Zn(2+).

The protein localises to the cell inner membrane. This is Protease HtpX homolog from Cereibacter sphaeroides (strain ATCC 17025 / ATH 2.4.3) (Rhodobacter sphaeroides).